We begin with the raw amino-acid sequence, 96 residues long: Co-chaperonin GroES (96 aa).

It belongs to the GroES chaperonin family. In terms of assembly, heptamer of 7 subunits arranged in a ring. Interacts with the chaperonin GroEL.

The protein localises to the cytoplasm. Together with the chaperonin GroEL, plays an essential role in assisting protein folding. The GroEL-GroES system forms a nano-cage that allows encapsulation of the non-native substrate proteins and provides a physical environment optimized to promote and accelerate protein folding. GroES binds to the apical surface of the GroEL ring, thereby capping the opening of the GroEL channel. The sequence is that of Co-chaperonin GroES from Caulobacter sp. (strain K31).